The primary structure comprises 448 residues: MRLLKSHPLLKLVNSYLIDASQPSNISYLWNFGSLLACCLIIQIVTGVTLAMHYSPNVLEAFNSIEHIMRDVNNGWLVRYLHSNTASAFFFLVYLHIGRGMYYGSYRAPRTLVWAIGTVILILMMATAFLGYQHSPKWFDISNKGSISNKGNITNSLPPLLQRWGGRINKRLFNKNLVKRGYCTSSSLNSPEMSERLQTIINELGINPVYVYEDLNQPSSWKQILHDTRDLSGVYMIINKTTKDYYIGSASNNRFYTRFCNHVIHFTGSKIVKLAIKKYELKNFAFVILDLYPNVVTKENNKELLDLEDKYLKLLVPNYNILTEAGSSFGYKHTEIDRQKMKDLYSDARREKIGSLNRGKKFSPETIEKIREKALTRPPMSEETKIKCIANTRPVVLYNLNRTIYGKYSTILEAANAINCNEKTIRRALQTEKKLVKRQWIVEDFSDK.

The interval 1-132 (MRLLKSHPLL…LMMATAFLGY (132 aa)) is cob exon 1 encoded. The next 3 membrane-spanning stretches (helical) occupy residues 32 to 52 (FGSL…TLAM), 86 to 106 (ASAF…YGSY), and 112 to 132 (LVWA…FLGY). The cob intron 1 encoded stretch occupies residues 133–448 (QHSPKWFDIS…QWIVEDFSDK (316 aa)). The 92-residue stretch at 230–321 (DLSGVYMIIN…LKLLVPNYNI (92 aa)) folds into the GIY-YIG domain.

To endonucleases of group I introns of fungi and phage. The mature protein may arise from proteolytic cleavage of an in-frame translation of cob exon 1 plus intron 1, containing the bI1 open reading frame.

It localises to the mitochondrion inner membrane. Its function is as follows. Mitochondrial DNA endonuclease involved in intron homing. The sequence is that of Probable intron-encoded endonuclease bI1 (bI1) from Neurospora crassa (strain ATCC 24698 / 74-OR23-1A / CBS 708.71 / DSM 1257 / FGSC 987).